A 1331-amino-acid polypeptide reads, in one-letter code: ABC multidrug transporter MDR2 (1331 aa).

Residues 1–50 form a disordered region; the sequence is MVEPSEKPNTQNDDVSKQEIRNPVSSSSSTSDKEKVAKKGNSDATKSLTP. Positions 31-41 are enriched in basic and acidic residues; sequence SDKEKVAKKGN. The next 4 helical transmembrane spans lie at 93–113, 147–167, 219–239, and 242–262; these read MILL…LPLF, YFVY…VGFI, KVGL…IGYV, and WKLA…MGGI. In terms of domain architecture, ABC transmembrane type-1 1 spans 97 to 387; the sequence is AIVSLASIAA…VAPNTQAFAS (291 aa). A glycan (N-linked (GlcNAc...) asparagine) is linked at asparagine 293. A run of 2 helical transmembrane segments spans residues 325–345 and 358–378; these read LGIM…LGFW and LSAI…IGNV. Residues 422 to 667 enclose the ABC transporter 1 domain; it reads IEFRGIKHIY…KGTYLQLVEA (246 aa). 457–464 contacts ATP; that stretch reads GPSGSGKS. Asparagine 529 carries an N-linked (GlcNAc...) asparagine glycan. A run of 2 helical transmembrane segments spans residues 762–782 and 808–828; these read LCGF…SVFF and LMFL…GVIF. In terms of domain architecture, ABC transmembrane type-1 2 spans 764 to 1051; that stretch reads GFFFAVLSGA…VFSFSPDMGK (288 aa). Asparagine 860 is a glycosylation site (N-linked (GlcNAc...) asparagine). A run of 4 helical transmembrane segments spans residues 884–904, 910–930, 995–1015, and 1025–1045; these read LGTI…ALAF, LVCI…FWIL, ASQS…GGLL, and FFLC…VFSF. The 239-residue stretch at 1086 to 1324 folds into the ABC transporter 2 domain; that stretch reads IEFRDVHFRY…KGRYYELVHM (239 aa). Residue asparagine 1108 is glycosylated (N-linked (GlcNAc...) asparagine). 1121 to 1128 contacts ATP; sequence GPSGCGKS.

The protein belongs to the ABC transporter superfamily. ABCB family. Multidrug resistance exporter (TC 3.A.1.201) subfamily.

It is found in the cell membrane. It carries out the reaction itraconazole(in) + ATP + H2O = itraconazole(out) + ADP + phosphate + H(+). Its function is as follows. ABC-type efflux transporter involved in the modulation susceptibility to itraconazole. This Trichophyton rubrum (strain ATCC MYA-4607 / CBS 118892) (Athlete's foot fungus) protein is ABC multidrug transporter MDR2.